Consider the following 339-residue polypeptide: Phenylalanine--tRNA ligase alpha subunit (339 aa).

Glu247 contributes to the Mg(2+) binding site.

It belongs to the class-II aminoacyl-tRNA synthetase family. Phe-tRNA synthetase alpha subunit type 1 subfamily. As to quaternary structure, tetramer of two alpha and two beta subunits. Mg(2+) serves as cofactor.

The protein resides in the cytoplasm. It carries out the reaction tRNA(Phe) + L-phenylalanine + ATP = L-phenylalanyl-tRNA(Phe) + AMP + diphosphate + H(+). In Deinococcus radiodurans (strain ATCC 13939 / DSM 20539 / JCM 16871 / CCUG 27074 / LMG 4051 / NBRC 15346 / NCIMB 9279 / VKM B-1422 / R1), this protein is Phenylalanine--tRNA ligase alpha subunit (pheS).